The primary structure comprises 130 residues: Large ribosomal subunit protein bL12 (130 aa).

The protein belongs to the bacterial ribosomal protein bL12 family. Homodimer. Part of the ribosomal stalk of the 50S ribosomal subunit. Forms a multimeric L10(L12)X complex, where L10 forms an elongated spine to which 2 to 4 L12 dimers bind in a sequential fashion. Binds GTP-bound translation factors.

Forms part of the ribosomal stalk which helps the ribosome interact with GTP-bound translation factors. Is thus essential for accurate translation. In Cutibacterium acnes (strain DSM 16379 / KPA171202) (Propionibacterium acnes), this protein is Large ribosomal subunit protein bL12.